We begin with the raw amino-acid sequence, 216 residues long: Probable nicotinate-nucleotide adenylyltransferase (216 aa).

This sequence belongs to the NadD family.

It carries out the reaction nicotinate beta-D-ribonucleotide + ATP + H(+) = deamido-NAD(+) + diphosphate. The protein operates within cofactor biosynthesis; NAD(+) biosynthesis; deamido-NAD(+) from nicotinate D-ribonucleotide: step 1/1. Its function is as follows. Catalyzes the reversible adenylation of nicotinate mononucleotide (NaMN) to nicotinic acid adenine dinucleotide (NaAD). The polypeptide is Probable nicotinate-nucleotide adenylyltransferase (Maridesulfovibrio salexigens (strain ATCC 14822 / DSM 2638 / NCIMB 8403 / VKM B-1763) (Desulfovibrio salexigens)).